A 157-amino-acid chain; its full sequence is Transcription antitermination protein NusB (157 aa).

Belongs to the NusB family.

Functionally, involved in transcription antitermination. Required for transcription of ribosomal RNA (rRNA) genes. Binds specifically to the boxA antiterminator sequence of the ribosomal RNA (rrn) operons. The protein is Transcription antitermination protein NusB of Xylella fastidiosa (strain M12).